The sequence spans 325 residues: Reticulocalbin-1 (325 aa).

An N-terminal signal peptide occupies residues 1-23 (MARGGRLGLALGLLLALVLALRA). N-linked (GlcNAc...) asparagine; partial glycosylation occurs at N47. A phosphoserine mark is found at S49 and S74. 6 consecutive EF-hand domains span residues 73-108 (ESKERLGKIVDRIDSDGDGLVTTEELKLWIKRVQKR), 109-144 (YIYDNVAKVWKDYDRDKDEKISWEEYKQATYGYYLG), 160-195 (KMLPRDERRFKASDLDGDLTATREEFTAFLHPEEFE), 197-232 (MKEIVVLETLEDIDKNGDGFVDQDEYIADMFSHEDN), 238-273 (WVLSEREQFNDFRDLNKDGKLDKDEIRHWILPQDYD), and 274-309 (HAQAEARHLVYESDKNKDEMLTKEEILDNWNMFVGS). 28 residues coordinate Ca(2+): D86, D88, D90, E97, D122, D124, D126, K128, E133, D173, D175, D177, T179, E184, D210, N212, D214, E221, D251, N253, D255, K257, E262, D287, N289, D291, M293, and E298. The short motif at 322-325 (HDEL) is the Prevents secretion from ER element.

It belongs to the CREC family. In terms of processing, O-glycosylated. O-mannosylated by POMT1 and POMT2 and elongated by POMGNT1.

The protein resides in the endoplasmic reticulum lumen. May regulate calcium-dependent activities in the endoplasmic reticulum lumen or post-ER compartment. The polypeptide is Reticulocalbin-1 (Rcn1) (Mus musculus (Mouse)).